A 123-amino-acid polypeptide reads, in one-letter code: Ribosome-binding factor A (123 aa).

This sequence belongs to the RbfA family. As to quaternary structure, monomer. Binds 30S ribosomal subunits, but not 50S ribosomal subunits or 70S ribosomes.

It is found in the cytoplasm. One of several proteins that assist in the late maturation steps of the functional core of the 30S ribosomal subunit. Associates with free 30S ribosomal subunits (but not with 30S subunits that are part of 70S ribosomes or polysomes). Required for efficient processing of 16S rRNA. May interact with the 5'-terminal helix region of 16S rRNA. The polypeptide is Ribosome-binding factor A (Ralstonia nicotianae (strain ATCC BAA-1114 / GMI1000) (Ralstonia solanacearum)).